A 267-amino-acid chain; its full sequence is C-type lectin domain family 12 member A (267 aa).

At 1–43 (MSEEIVYANLKIQDPDKKEETQKSDKCGGKVSADASHSQQKTV) the chain is on the cytoplasmic side. The short motif at 5–10 (IVYANL) is the ITIM motif element. Position 7 is a phosphotyrosine (Tyr7). Residues 44–64 (LILILLCLLLFIGMGVLGGIF) form a helical; Signal-anchor for type II membrane protein membrane-spanning segment. Topologically, residues 65 to 267 (YTTLATEMIK…VLNGLPEDSR (203 aa)) are extracellular. 2 N-linked (GlcNAc...) asparagine glycosylation sites follow: Asn98 and Asn105. 4 disulfides stabilise this stretch: Cys118/Cys130, Cys133/Cys144, Cys161/Cys246, and Cys225/Cys238. Residues 140-247 (YKDSCYSQLN…CTDENNIICE (108 aa)) enclose the C-type lectin domain. An N-linked (GlcNAc...) asparagine glycan is attached at Asn165.

Homodimer; disulfide-linked. Interacts (when the ITIM motif is phosphorylated) with PTPN6 and PTPN11. In terms of processing, phosphorylated at Tyr-7 by SRC in the ITIM motif following ligand-binding, promoting recruitment of tyrosine-protein phosphatases PTPN6 and PTPN11. In terms of tissue distribution, mainly expressed in lymphoid tissues. Preferentially expressed in peripheral blood leukocytes; less frequent in thymus, spleen, heart, brain and lung; and undetectable in other tissues.

The protein localises to the cell membrane. Its function is as follows. Myeloid inhibitory C-type lectin receptor that acts as a negative regulator of myeloid cell activation. Myeloid cell inhibition is required to limit proinflammatory pathways and protect against excessive inflammation. Specifically recognizes and binds various structures, such as neutrophil extracellular traps (NETs) or monosodium urate crystals. Also acts as a pattern-recognition receptor for pathogen-associated molecules, such as plasmodium hemozoin or mycobacterial micolic acid. Ligand-binding induces phosphorylation of its ITIM motif, followed by recruitment of tyrosine-protein phosphatases PTPN6 and PTPN11, which counteract tyrosine-protein kinase SYK, thereby preventing myeloid cell activation. Acts as a pattern-recognition receptor for NETs in neutrophils: specifically recognizes DNA in NETs, leading to inhibit neutrophil activation and limit further NET formation. This regulation is essential for controlling key neutrophil responses and limit NET-mediated inflammatory conditions. Also recognizes dead cells by acting as a receptor for monosodium urate crystals, leading to down-regulate neutrophil activation. Binding to monosodium urate crystals also promotes the type I interferon response. Acts as an inhibitor of natural killer (NK) cell cytotoxicity. Also acts as an ihibitor of dendritic cell maturation in an IL10-dependent manner. The protein is C-type lectin domain family 12 member A of Mus musculus (Mouse).